Reading from the N-terminus, the 633-residue chain is Pesticidal crystal protein Cry2Aa (633 aa).

Belongs to the delta endotoxin family.

Its function is as follows. Promotes colloidosmotic lysis by binding to the midgut epithelial cells of both dipteran (Aedes aegypti) and lepidopteran (Manduca sexta) larvae. In Bacillus thuringiensis subsp. kenyae, this protein is Pesticidal crystal protein Cry2Aa (cry2Aa).